The primary structure comprises 603 residues: MISTGLPLFTLSKICHNCFFKQTRSLSRYSSKDKVKGRRRLLPRPNTEKFNSARSGVGVGVGNGAGAGARVGVGAGAGSVAAKVFESGNFSQLHNNGLSKQAQTAGLDLKQKITSFDQLKVFPSVREAMIKEIKSQYNLKGPQHSSIDDVVIKPTPVQIAAIRKINQTRKIKVAKNLDEMSEGERIQIELQTKNEEQKTKIFTVAAETGSGKTWAYLANIMSKLKEDDYKWFNQSPEAYNSFKSSEQVRSVILLPTHELVEQVYETLKRANSFLLEYENVPLQYKEFLNLPEHHTLGLSIAKLSHGDAPINVYKQLRNRGKIDILITTPGKITSFSKLESIDRPFKIFKSIRYCVIDEADTLFDDSFLKDTTAVVKNFPKLLDLILVSATIPKEFEKTLLRLFPDQKSLIRVATPSLHKISKNIKVMTLDADLAPYNGSKTRCLAQAIYAISKDGTEHNHVKRIIIFVNEKAEVDGLVDLLQSKYHIRREDICGISGSVNVGDRKDYLEPFLKPAQLLEDDVDQSKIKILVTTDLLARGMNFIGIKNVILMGLPKSSVELVHRLGRTGRMNQLGRVFIIVDKKSRKSWVKGLGSAIMKGSRIG.

Residues 1–71 (MISTGLPLFT…GNGAGAGARV (71 aa)) constitute a mitochondrion transit peptide. A Q motif motif is present at residues 151–158 (VIKPTPVQ). In terms of domain architecture, Helicase ATP-binding spans 193 to 409 (KNEEQKTKIF…LRLFPDQKSL (217 aa)). 206–213 (AETGSGKT) serves as a coordination point for ATP. Residues 357 to 360 (DEAD) carry the DEAD box motif. The 161-residue stretch at 443 to 603 (CLAQAIYAIS…SAIMKGSRIG (161 aa)) folds into the Helicase C-terminal domain.

It belongs to the DEAD box helicase family. MRH4 subfamily.

Its subcellular location is the mitochondrion. It catalyses the reaction ATP + H2O = ADP + phosphate + H(+). Its function is as follows. ATP-binding RNA helicase involved in mitochondrial RNA metabolism. Required for maintenance of mitochondrial DNA. This is ATP-dependent RNA helicase MRH4, mitochondrial (MRH4) from Lodderomyces elongisporus (strain ATCC 11503 / CBS 2605 / JCM 1781 / NBRC 1676 / NRRL YB-4239) (Yeast).